A 580-amino-acid polypeptide reads, in one-letter code: Proline--tRNA ligase (580 aa).

This sequence belongs to the class-II aminoacyl-tRNA synthetase family. ProS type 1 subfamily. Homodimer.

It is found in the cytoplasm. The enzyme catalyses tRNA(Pro) + L-proline + ATP = L-prolyl-tRNA(Pro) + AMP + diphosphate. In terms of biological role, catalyzes the attachment of proline to tRNA(Pro) in a two-step reaction: proline is first activated by ATP to form Pro-AMP and then transferred to the acceptor end of tRNA(Pro). As ProRS can inadvertently accommodate and process non-cognate amino acids such as alanine and cysteine, to avoid such errors it has two additional distinct editing activities against alanine. One activity is designated as 'pretransfer' editing and involves the tRNA(Pro)-independent hydrolysis of activated Ala-AMP. The other activity is designated 'posttransfer' editing and involves deacylation of mischarged Ala-tRNA(Pro). The misacylated Cys-tRNA(Pro) is not edited by ProRS. The chain is Proline--tRNA ligase from Albidiferax ferrireducens (strain ATCC BAA-621 / DSM 15236 / T118) (Rhodoferax ferrireducens).